A 1141-amino-acid chain; its full sequence is Isoleucine--tRNA ligase (1141 aa).

The 'HIGH' region motif lies at 50–60 (PSANGMPGIHH). Positions 689 to 693 (KMSKR) match the 'KMSKS' region motif. ATP is bound at residue K692.

It belongs to the class-I aminoacyl-tRNA synthetase family. IleS type 2 subfamily. As to quaternary structure, monomer. Zn(2+) is required as a cofactor.

The protein localises to the cytoplasm. It catalyses the reaction tRNA(Ile) + L-isoleucine + ATP = L-isoleucyl-tRNA(Ile) + AMP + diphosphate. Its function is as follows. Catalyzes the attachment of isoleucine to tRNA(Ile). As IleRS can inadvertently accommodate and process structurally similar amino acids such as valine, to avoid such errors it has two additional distinct tRNA(Ile)-dependent editing activities. One activity is designated as 'pretransfer' editing and involves the hydrolysis of activated Val-AMP. The other activity is designated 'posttransfer' editing and involves deacylation of mischarged Val-tRNA(Ile). This Bacteroides fragilis (strain YCH46) protein is Isoleucine--tRNA ligase.